A 367-amino-acid chain; its full sequence is Small ribosomal subunit protein uS2 (367 aa).

The disordered stretch occupies residues 1–68 (MPKKAEAKTG…NSTPSTGSKF (68 aa)). Positions 21–40 (AKKDVKAEVNETNKTAEKVS) are enriched in basic and acidic residues. Residues 53–66 (TNESSSNSTPSTGS) show a composition bias toward low complexity.

This sequence belongs to the universal ribosomal protein uS2 family.

The polypeptide is Small ribosomal subunit protein uS2 (Malacoplasma penetrans (strain HF-2) (Mycoplasma penetrans)).